Reading from the N-terminus, the 291-residue chain is Methionine aminopeptidase (291 aa).

Histidine 65 is a substrate binding site. The a divalent metal cation site is built by aspartate 85, aspartate 96, and histidine 155. Histidine 163 is a binding site for substrate. A divalent metal cation is bound by residues glutamate 188 and glutamate 276.

The protein belongs to the peptidase M24A family. Methionine aminopeptidase archaeal type 2 subfamily. Monomer. It depends on Co(2+) as a cofactor. Zn(2+) serves as cofactor. Requires Mn(2+) as cofactor. Fe(2+) is required as a cofactor.

The enzyme catalyses Release of N-terminal amino acids, preferentially methionine, from peptides and arylamides.. Functionally, removes the N-terminal methionine from nascent proteins. The N-terminal methionine is often cleaved when the second residue in the primary sequence is small and uncharged (Met-Ala-, Cys, Gly, Pro, Ser, Thr, or Val). This chain is Methionine aminopeptidase, found in Archaeoglobus fulgidus (strain ATCC 49558 / DSM 4304 / JCM 9628 / NBRC 100126 / VC-16).